A 676-amino-acid chain; its full sequence is Heat shock cognate HSP70 protein (676 aa).

A disordered region spans residues 613-676; that stretch reads SARREGKDGW…RIEAINANTE (64 aa). Over residues 630-646 the composition is skewed to acidic residues; it reads GSGDDNDGDDNSDEEDE.

This sequence belongs to the heat shock protein 70 family.

The sequence is that of Heat shock cognate HSP70 protein from Trypanosoma brucei brucei.